A 149-amino-acid polypeptide reads, in one-letter code: Urease accessory protein UreE (149 aa).

Belongs to the UreE family.

The protein resides in the cytoplasm. Involved in urease metallocenter assembly. Binds nickel. Probably functions as a nickel donor during metallocenter assembly. This is Urease accessory protein UreE from Prochlorococcus marinus (strain MIT 9312).